Reading from the N-terminus, the 568-residue chain is MLPGLAAAAAHRCSWSSLCRLRLRCRAAACNPSDRQEWQNLVTFGSFSNMVPCSHPYIGTLSQVKLYSTNVQKEGQGSQTLRVEKVPSFETAEGIGTELKAPLKQEPLQVRVKAVLKKREYGSKYTQNNFITGVRAINEFCLKSSDLEQLRKIRRRSPHEDTESFTVYLRSDVEAKSLEVWGSPEALAREKKLRKEAEIEYRERLFRNQKILREYRDFLGNTKPRSRTASVFFKGPGKVVMVAICINGLNCFFKFLAWIYTGSASMFSEAIHSLSDTCNQGLLALGISKSVQTPDPSHPYGFSNMRYISSLISGVGIFMMGAGLSWYHGVMGLLHPQPIESLLWAYCILAGSLVSEGATLLVAVNELRRNARAKGMSFYKYVMESRDPSTNVILLEDTAAVLGVIIAATCMGLTSITGNPLYDSLGSLGVGTLLGMVSAFLIYTNTEALLGRSIQPEQVQRLTELLENDPSVRAIHDVKATDLGLGKVRFKAEVDFDGRVVTRSYLEKQDFDQMLQEIQEVKTPEELETFMLKHGENIIDTLGAEVDRLEKELKKRNPEVRHVDLEIL.

Residues 1–67 (MLPGLAAAAA…IGTLSQVKLY (67 aa)) constitute a mitochondrion transit peptide. 5 helical membrane passes run 239–259 (VVMV…LAWI), 314–334 (GVGI…MGLL), 342–362 (LLWA…TLLV), 392–412 (VILL…TCMG), and 424–444 (SLGS…LIYT). Residues 462–466 (LTELL) carry the LXXLL motif motif.

It belongs to the cation diffusion facilitator (CDF) transporter (TC 2.A.4) family. SLC30A subfamily. In terms of assembly, interacts with GRIP1, ESR1 and AR. As to expression, ubiquitously expressed in fetal and adult tissues and cancer cell lines.

It is found in the mitochondrion membrane. It localises to the nucleus. The protein localises to the endoplasmic reticulum. The enzyme catalyses Zn(2+)(in) + 2 H(+)(out) = Zn(2+)(out) + 2 H(+)(in). Its function is as follows. Mitochondrial proton-coupled zinc ion antiporter mediating the export of zinc from the mitochondria and involved in zinc homeostasis, zinc mobilization as well as mitochondrial morphology and health. In nucleus, functions as a secondary coactivator for nuclear receptors by cooperating with p160 coactivators subtypes. Plays a role in transcriptional activation of Wnt-responsive genes. In Homo sapiens (Human), this protein is Proton-coupled zinc antiporter SLC30A9, mitochondrial.